The following is a 177-amino-acid chain: Decaprenylphosphoryl-5-phosphoribose phosphatase (177 aa).

4 consecutive transmembrane segments (helical) span residues 35–55, 62–82, 124–144, and 150–170; these read HFGE…IALP, LVAG…KRLV, GLPL…LLGV, and VAVG…VGGG.

It belongs to the PA-phosphatase related phosphoesterase family.

It localises to the cell membrane. It catalyses the reaction trans,octa-cis-decaprenylphospho-beta-D-ribofuranose 5-phosphate + H2O = trans,octa-cis-decaprenylphospho-beta-D-ribofuranose + phosphate. Its pathway is cell wall biogenesis; cell wall polysaccharide biosynthesis. Phosphatase involved in the biosynthesis of decaprenylphosphoryl arabinose (DPA), which serves as the arabinose donor for the biosynthesis of arabinogalactan, the major mycobacterial cell wall polysaccharide. Catalyzes the dephosphorylation of decaprenylphosphoryl-5-phosphoribose (DPPR) to decaprenyl-phosphoribose (DPR). The chain is Decaprenylphosphoryl-5-phosphoribose phosphatase from Mycobacterium tuberculosis (strain CDC 1551 / Oshkosh).